Here is a 280-residue protein sequence, read N- to C-terminus: 3-phenylpropionate-dihydrodiol/cinnamic acid-dihydrodiol dehydrogenase (280 aa).

Substrate is bound at residue S143. The Proton acceptor role is filled by Y156.

This sequence belongs to the short-chain dehydrogenases/reductases (SDR) family.

It catalyses the reaction 3-(cis-5,6-dihydroxycyclohexa-1,3-dien-1-yl)propanoate + NAD(+) = 3-(2,3-dihydroxyphenyl)propanoate + NADH + H(+). The catalysed reaction is (2E)-3-(cis-5,6-dihydroxycyclohexa-1,3-dien-1-yl)prop-2-enoate + NAD(+) = (2E)-3-(2,3-dihydroxyphenyl)prop-2-enoate + NADH + H(+). It functions in the pathway aromatic compound metabolism; 3-phenylpropanoate degradation. Its function is as follows. Converts 3-phenylpropionate-dihydrodiol (PP-dihydrodiol) and cinnamic acid-dihydrodiol (CI-dihydrodiol) into 3-(2,3-dihydroxylphenyl)propanoic acid (DHPP) and 2,3-dihydroxicinnamic acid (DHCI), respectively. The polypeptide is 3-phenylpropionate-dihydrodiol/cinnamic acid-dihydrodiol dehydrogenase (Photorhabdus laumondii subsp. laumondii (strain DSM 15139 / CIP 105565 / TT01) (Photorhabdus luminescens subsp. laumondii)).